Here is a 459-residue protein sequence, read N- to C-terminus: Bifunctional protein GlmU (459 aa).

A pyrophosphorylase region spans residues 1 to 229 (MTNYAIILAA…FDESLGVNDR (229 aa)). UDP-N-acetyl-alpha-D-glucosamine contacts are provided by residues 8–11 (LAAG), lysine 22, glutamine 72, and 77–78 (GT). Aspartate 102 serves as a coordination point for Mg(2+). Residues glycine 139, glutamate 154, asparagine 169, and asparagine 227 each coordinate UDP-N-acetyl-alpha-D-glucosamine. Asparagine 227 contacts Mg(2+). Residues 230–250 (VALAKAEKVMRRRINHAHMVN) are linker. An N-acetyltransferase region spans residues 251-459 (GVTLTNPAST…KKKPHHPNNK (209 aa)). Residues arginine 332 and lysine 350 each contribute to the UDP-N-acetyl-alpha-D-glucosamine site. Histidine 362 (proton acceptor) is an active-site residue. Residues tyrosine 365 and asparagine 376 each coordinate UDP-N-acetyl-alpha-D-glucosamine. Acetyl-CoA-binding positions include alanine 379, 385–386 (NY), serine 404, alanine 422, and arginine 439.

This sequence in the N-terminal section; belongs to the N-acetylglucosamine-1-phosphate uridyltransferase family. In the C-terminal section; belongs to the transferase hexapeptide repeat family. Homotrimer. The cofactor is Mg(2+).

It localises to the cytoplasm. The catalysed reaction is alpha-D-glucosamine 1-phosphate + acetyl-CoA = N-acetyl-alpha-D-glucosamine 1-phosphate + CoA + H(+). The enzyme catalyses N-acetyl-alpha-D-glucosamine 1-phosphate + UTP + H(+) = UDP-N-acetyl-alpha-D-glucosamine + diphosphate. It participates in nucleotide-sugar biosynthesis; UDP-N-acetyl-alpha-D-glucosamine biosynthesis; N-acetyl-alpha-D-glucosamine 1-phosphate from alpha-D-glucosamine 6-phosphate (route II): step 2/2. Its pathway is nucleotide-sugar biosynthesis; UDP-N-acetyl-alpha-D-glucosamine biosynthesis; UDP-N-acetyl-alpha-D-glucosamine from N-acetyl-alpha-D-glucosamine 1-phosphate: step 1/1. It functions in the pathway bacterial outer membrane biogenesis; LPS lipid A biosynthesis. Its function is as follows. Catalyzes the last two sequential reactions in the de novo biosynthetic pathway for UDP-N-acetylglucosamine (UDP-GlcNAc). The C-terminal domain catalyzes the transfer of acetyl group from acetyl coenzyme A to glucosamine-1-phosphate (GlcN-1-P) to produce N-acetylglucosamine-1-phosphate (GlcNAc-1-P), which is converted into UDP-GlcNAc by the transfer of uridine 5-monophosphate (from uridine 5-triphosphate), a reaction catalyzed by the N-terminal domain. The chain is Bifunctional protein GlmU from Streptococcus mutans serotype c (strain ATCC 700610 / UA159).